We begin with the raw amino-acid sequence, 431 residues long: ATP-dependent RNA helicase DBP8 (431 aa).

Residues 2–30 (ADFKSLGLSKWLTESLRAMKITQPTAIQK) carry the Q motif motif. The 177-residue stretch at 33–209 (IPKILEGRDC…NAPVQKGKPP (177 aa)) folds into the Helicase ATP-binding domain. 46–53 (AKTGSGKT) contributes to the ATP binding site. Positions 155–158 (DEAD) match the DEAD box motif. In terms of domain architecture, Helicase C-terminal spans 242 to 389 (YLYQLLTCEE…TNKVHDTAVI (148 aa)). The interval 404 to 431 (LMAMQKENFGERKRQQKKKQNDGKSLRS) is disordered. The segment covering 411–431 (NFGERKRQQKKKQNDGKSLRS) has biased composition (basic and acidic residues).

The protein belongs to the DEAD box helicase family. DDX49/DBP8 subfamily. In terms of assembly, interacts with ESF2.

It is found in the nucleus. The protein resides in the nucleolus. It catalyses the reaction ATP + H2O = ADP + phosphate + H(+). In terms of biological role, ATP-binding RNA helicase involved in 40S ribosomal subunit biogenesis and is required for the normal formation of 18S rRNAs through pre-rRNA processing at A0, A1 and A2 sites. Required for vegetative growth. The protein is ATP-dependent RNA helicase DBP8 (DBP8) of Saccharomyces cerevisiae (strain YJM789) (Baker's yeast).